The sequence spans 211 residues: Peptidyl-prolyl cis-trans isomerase FKBP14 (211 aa).

Positions 1-19 (MRLFLWNAVLTLFVTSLIG) are cleaved as a signal peptide. The cysteines at positions 38 and 96 are disulfide-linked. In terms of domain architecture, PPIase FKBP-type spans 45–135 (GDLMLVHYEG…IFNIDLLEIR (91 aa)). Positions 135 to 170 (RNGPRSHESFQEMDLNDDWKLSKDEVKAYLKKEFEK) constitute an EF-hand 1 domain. Ca(2+) is bound by residues Asp-148, Asn-150, Asp-152, Lys-154, and Glu-159. A glycan (N-linked (GlcNAc...) asparagine) is linked at Asn-176. Positions 179 to 211 (HHDALVEDIFDKEDEDKDGFISAREFTYKHDEL) constitute an EF-hand 2 domain. Residues Asp-192, Asp-194, Asp-196, Phe-198, and Glu-203 each coordinate Ca(2+). Positions 208–211 (HDEL) match the Prevents secretion from ER motif.

Monomer. Homodimer. Interacts with type III, type IV and type X collagens.

The protein localises to the endoplasmic reticulum lumen. It carries out the reaction [protein]-peptidylproline (omega=180) = [protein]-peptidylproline (omega=0). Its activity is regulated as follows. Inhibited by tacrolimus/FK506. In terms of biological role, PPIase which accelerates the folding of proteins during protein synthesis. Has a preference for substrates containing 4-hydroxylproline modifications, including type III collagen. May also target type VI and type X collagens. The polypeptide is Peptidyl-prolyl cis-trans isomerase FKBP14 (FKBP14) (Homo sapiens (Human)).